Reading from the N-terminus, the 242-residue chain is 1-(5-phosphoribosyl)-5-[(5-phosphoribosylamino)methylideneamino] imidazole-4-carboxamide isomerase (242 aa).

D10 acts as the Proton acceptor in catalysis.

This sequence belongs to the HisA/HisF family.

The protein resides in the cytoplasm. It carries out the reaction 1-(5-phospho-beta-D-ribosyl)-5-[(5-phospho-beta-D-ribosylamino)methylideneamino]imidazole-4-carboxamide = 5-[(5-phospho-1-deoxy-D-ribulos-1-ylimino)methylamino]-1-(5-phospho-beta-D-ribosyl)imidazole-4-carboxamide. The protein operates within amino-acid biosynthesis; L-histidine biosynthesis; L-histidine from 5-phospho-alpha-D-ribose 1-diphosphate: step 4/9. The sequence is that of 1-(5-phosphoribosyl)-5-[(5-phosphoribosylamino)methylideneamino] imidazole-4-carboxamide isomerase from Corynebacterium diphtheriae (strain ATCC 700971 / NCTC 13129 / Biotype gravis).